Reading from the N-terminus, the 397-residue chain is Acetate kinase (397 aa).

Asn7 is a Mg(2+) binding site. Lys14 provides a ligand contact to ATP. Arg88 is a binding site for substrate. The Proton donor/acceptor role is filled by Asp145. ATP contacts are provided by residues 205 to 209 (HLGNG), 279 to 281 (DMR), and 326 to 330 (GIGEN). Residue Glu380 participates in Mg(2+) binding.

The protein belongs to the acetokinase family. Homodimer. It depends on Mg(2+) as a cofactor. Requires Mn(2+) as cofactor.

Its subcellular location is the cytoplasm. It carries out the reaction acetate + ATP = acetyl phosphate + ADP. Its pathway is metabolic intermediate biosynthesis; acetyl-CoA biosynthesis; acetyl-CoA from acetate: step 1/2. In terms of biological role, catalyzes the formation of acetyl phosphate from acetate and ATP. Can also catalyze the reverse reaction. In Campylobacter concisus (strain 13826), this protein is Acetate kinase.